A 509-amino-acid chain; its full sequence is Glycogen synthase (509 aa).

Lysine 47 contacts ADP-alpha-D-glucose.

This sequence belongs to the glycosyltransferase 1 family. Bacterial/plant glycogen synthase subfamily.

The enzyme catalyses [(1-&gt;4)-alpha-D-glucosyl](n) + ADP-alpha-D-glucose = [(1-&gt;4)-alpha-D-glucosyl](n+1) + ADP + H(+). It functions in the pathway glycan biosynthesis; glycogen biosynthesis. Functionally, synthesizes alpha-1,4-glucan chains using ADP-glucose. This is Glycogen synthase from Xanthomonas oryzae pv. oryzae (strain MAFF 311018).